Here is a 588-residue protein sequence, read N- to C-terminus: Neuropeptide-like 1 (588 aa).

A propeptide spanning residues 1–179 (MQCIPKKTFM…DPEVLEYSPD (179 aa)) is cleaved from the precursor. Residues 115–143 (NGDLPITIQERESDNDDEEKRSASSSDNV) are disordered. Position 194 is a threonine amide (threonine 194). Residues serine 210, serine 227, and serine 244 each carry the serine amide modification. At tyrosine 260 the chain carries Tyrosine amide. Glutamate 281 bears the Glutamic acid 1-amide mark. The propeptide occupies 285-299 (SIASLARSGDWPSVA). Tyrosine 318 bears the Tyrosine amide mark. A propeptide spanning residues 321–588 (SLSDDREAPS…SNSHIAPRSM (268 aa)) is cleaved from the precursor. The disordered stretch occupies residues 342–382 (GNSEGKENEWQATPFTVSEDLDEGKAKNRSNRRIEASQTRH).

The protein localises to the secreted. In Camponotus floridanus (Florida carpenter ant), this protein is Neuropeptide-like 1.